Consider the following 382-residue polypeptide: Mannitol-1-phosphate 5-dehydrogenase (382 aa).

3-14 (AVHFGAGNIGRG) is an NAD(+) binding site.

The protein belongs to the mannitol dehydrogenase family.

The catalysed reaction is D-mannitol 1-phosphate + NAD(+) = beta-D-fructose 6-phosphate + NADH + H(+). The chain is Mannitol-1-phosphate 5-dehydrogenase from Paenarthrobacter aurescens (strain TC1).